We begin with the raw amino-acid sequence, 595 residues long: Proline--tRNA ligase (595 aa).

The disordered stretch occupies residues 1 to 22; the sequence is MKMSTMFGATLHTAPGRSESEG.

This sequence belongs to the class-II aminoacyl-tRNA synthetase family. ProS type 1 subfamily. Homodimer.

It is found in the cytoplasm. The catalysed reaction is tRNA(Pro) + L-proline + ATP = L-prolyl-tRNA(Pro) + AMP + diphosphate. Catalyzes the attachment of proline to tRNA(Pro) in a two-step reaction: proline is first activated by ATP to form Pro-AMP and then transferred to the acceptor end of tRNA(Pro). As ProRS can inadvertently accommodate and process non-cognate amino acids such as alanine and cysteine, to avoid such errors it has two additional distinct editing activities against alanine. One activity is designated as 'pretransfer' editing and involves the tRNA(Pro)-independent hydrolysis of activated Ala-AMP. The other activity is designated 'posttransfer' editing and involves deacylation of mischarged Ala-tRNA(Pro). The misacylated Cys-tRNA(Pro) is not edited by ProRS. The protein is Proline--tRNA ligase of Salinispora tropica (strain ATCC BAA-916 / DSM 44818 / JCM 13857 / NBRC 105044 / CNB-440).